We begin with the raw amino-acid sequence, 373 residues long: UPF0725 protein At1g23950 (373 aa).

At threonine 2 the chain carries N-acetylthreonine.

It belongs to the UPF0725 (EMB2204) family.

The chain is UPF0725 protein At1g23950 from Arabidopsis thaliana (Mouse-ear cress).